A 311-amino-acid chain; its full sequence is MFHHVSVMLRETIDELNVKKDGVYVDCTLGGAGHALYLLNQLDENGHLIAIDQDLTAIENAKEVLKDHLDQVTFVHSNFRQINQILDDLDIDKVDGIYYDLGVSSPQLDVPERGFSYHQDARLDMRMDQTQELSAYEVVNEWPYEDLVRIFYRYGEEKFSKQIARRIEKTRENEPIETTLQLVDVIKEGIPAKARRKGGHPAKRVFQAIRIAVNDELKAFEDSLEQAIERVKVHGRISVITFHSLEDRLCKQIFQEYEKGPEVPRGLPIIPEEYTPKLKRVNRKPISASEEDLAENNRARSAKLRVAEILK.

Residues 32 to 34 (AGH), aspartate 52, phenylalanine 79, aspartate 100, and glutamine 107 each bind S-adenosyl-L-methionine.

The protein belongs to the methyltransferase superfamily. RsmH family.

The protein resides in the cytoplasm. It catalyses the reaction cytidine(1402) in 16S rRNA + S-adenosyl-L-methionine = N(4)-methylcytidine(1402) in 16S rRNA + S-adenosyl-L-homocysteine + H(+). Its function is as follows. Specifically methylates the N4 position of cytidine in position 1402 (C1402) of 16S rRNA. The sequence is that of Ribosomal RNA small subunit methyltransferase H from Staphylococcus carnosus (strain TM300).